A 495-amino-acid chain; its full sequence is L-arabinose isomerase (495 aa).

Mn(2+) is bound by residues E305, E332, H349, and H448.

Belongs to the arabinose isomerase family. Mn(2+) is required as a cofactor.

It catalyses the reaction beta-L-arabinopyranose = L-ribulose. The protein operates within carbohydrate degradation; L-arabinose degradation via L-ribulose; D-xylulose 5-phosphate from L-arabinose (bacterial route): step 1/3. In terms of biological role, catalyzes the conversion of L-arabinose to L-ribulose. The sequence is that of L-arabinose isomerase from Mannheimia succiniciproducens (strain KCTC 0769BP / MBEL55E).